A 172-amino-acid chain; its full sequence is Ribosome maturation factor RimM (172 aa).

One can recognise a PRC barrel domain in the interval 97 to 170; sequence ENEFYFHEII…KITIEVMEGL (74 aa).

Belongs to the RimM family. As to quaternary structure, binds ribosomal protein uS19.

It localises to the cytoplasm. An accessory protein needed during the final step in the assembly of 30S ribosomal subunit, possibly for assembly of the head region. Essential for efficient processing of 16S rRNA. May be needed both before and after RbfA during the maturation of 16S rRNA. It has affinity for free ribosomal 30S subunits but not for 70S ribosomes. The polypeptide is Ribosome maturation factor RimM (Listeria monocytogenes serovar 1/2a (strain ATCC BAA-679 / EGD-e)).